The primary structure comprises 349 residues: DNA replication and repair protein RecF (349 aa).

30–37 is an ATP binding site; it reads GKNGSGKT.

The protein belongs to the RecF family.

Its subcellular location is the cytoplasm. Functionally, the RecF protein is involved in DNA metabolism; it is required for DNA replication and normal SOS inducibility. RecF binds preferentially to single-stranded, linear DNA. It also seems to bind ATP. In Francisella tularensis subsp. tularensis (strain FSC 198), this protein is DNA replication and repair protein RecF.